We begin with the raw amino-acid sequence, 220 residues long: Fructose-6-phosphate aldolase (220 aa).

Lys85 (schiff-base intermediate with substrate) is an active-site residue.

Belongs to the transaldolase family. Type 3A subfamily. Homodecamer.

It is found in the cytoplasm. The catalysed reaction is beta-D-fructose 6-phosphate = dihydroxyacetone + D-glyceraldehyde 3-phosphate. Its function is as follows. Catalyzes the reversible formation of fructose 6-phosphate from dihydroxyacetone and D-glyceraldehyde 3-phosphate via an aldolization reaction. This is Fructose-6-phosphate aldolase from Enterobacter sp. (strain 638).